Consider the following 149-residue polypeptide: Protein SprT-like (149 aa).

In terms of domain architecture, SprT-like spans 5 to 143 (DYVKQVSLED…CGLCRGKLLL (139 aa)). A Zn(2+)-binding site is contributed by histidine 64. Glutamate 65 is an active-site residue. Histidine 68 is a binding site for Zn(2+).

It belongs to the SprT family. It depends on Zn(2+) as a cofactor.

The protein resides in the cytoplasm. This is Protein SprT-like from Streptococcus pneumoniae (strain Hungary19A-6).